The chain runs to 362 residues: Histidinol-phosphate aminotransferase (362 aa).

Lysine 219 bears the N6-(pyridoxal phosphate)lysine mark.

This sequence belongs to the class-II pyridoxal-phosphate-dependent aminotransferase family. Histidinol-phosphate aminotransferase subfamily. Homodimer. It depends on pyridoxal 5'-phosphate as a cofactor.

The catalysed reaction is L-histidinol phosphate + 2-oxoglutarate = 3-(imidazol-4-yl)-2-oxopropyl phosphate + L-glutamate. It participates in amino-acid biosynthesis; L-histidine biosynthesis; L-histidine from 5-phospho-alpha-D-ribose 1-diphosphate: step 7/9. In Maricaulis maris (strain MCS10) (Caulobacter maris), this protein is Histidinol-phosphate aminotransferase.